A 557-amino-acid polypeptide reads, in one-letter code: Formate--tetrahydrofolate ligase (557 aa).

44 to 51 (TPLGEGKS) provides a ligand contact to ATP.

Belongs to the formate--tetrahydrofolate ligase family.

It catalyses the reaction (6S)-5,6,7,8-tetrahydrofolate + formate + ATP = (6R)-10-formyltetrahydrofolate + ADP + phosphate. The protein operates within one-carbon metabolism; tetrahydrofolate interconversion. The chain is Formate--tetrahydrofolate ligase from Desulfotalea psychrophila (strain LSv54 / DSM 12343).